Reading from the N-terminus, the 625-residue chain is MKNKTNLGLSVFFFFICLVSVTSDLEADRRALIALRDGVHGRPLLWNLTAPPCTWGGVQCESGRVTALRLPGVGLSGPLPIAIGNLTKLETLSFRFNALNGPLPPDFANLTLLRYLYLQGNAFSGEIPSFLFTLPNIIRINLAQNNFLGRIPDNVNSATRLATLYLQDNQLTGPIPEIKIKLQQFNVSSNQLNGSIPDPLSGMPKTAFLGNLLCGKPLDACPVNGTGNGTVTPGGKGKSDKLSAGAIVGIVIGCFVLLLVLFLIVFCLCRKKKKEQVVQSRSIEAAPVPTSSAAVAKESNGPPAVVANGASENGVSKNPAAVSKDLTFFVKSFGEFDLDGLLKASAEVLGKGTFGSSYKASFDHGLVVAVKRLRDVVVPEKEFREKLQVLGSISHANLVTLIAYYFSRDEKLVVFEYMSRGSLSALLHGNKGSGRSPLNWETRANIALGAARAISYLHSRDATTSHGNIKSSNILLSESFEAKVSDYCLAPMISPTSTPNRIDGYRAPEVTDARKISQKADVYSFGVLILELLTGKSPTHQQLHEEGVDLPRWVSSITEQQSPSDVFDPELTRYQSDSNENMIRLLNIGISCTTQYPDSRPTMPEVTRLIEEVSRSPASPGPLSD.

Positions 1 to 23 are cleaved as a signal peptide; it reads MKNKTNLGLSVFFFFICLVSVTS. LRR repeat units follow at residues 88 to 111, 112 to 134, 136 to 158, 160 to 182, and 183 to 204; these read KLETLSFRFNALNGPLPPDFANLT, LLRYLYLQGNAFSGEIPSFLFTL, NIIRINLAQNNFLGRIPDNVNSA, RLATLYLQDNQLTGPIPEIKIKL, and QQFNVSSNQLNGSIPDPLSGMP. A helical membrane pass occupies residues 246-266; it reads AIVGIVIGCFVLLLVLFLIVF. The Protein kinase domain maps to 343–613; that stretch reads KASAEVLGKG…PEVTRLIEEV (271 aa). Ser-345 is subject to Phosphoserine. Residues 349 to 357 and Lys-371 each bind ATP; that span reads LGKGTFGSS. A Phosphoserine modification is found at Ser-422. Residues Thr-442 and Thr-496 each carry the phosphothreonine modification. Ser-517 carries the post-translational modification Phosphoserine. Thr-593 carries the phosphothreonine modification. A phosphoserine mark is found at Ser-619 and Ser-624.

It belongs to the protein kinase superfamily. Ser/Thr protein kinase family.

It is found in the cell membrane. Functionally, might be involved in early recognition of growth promoting fungi. Appears to be specific for P.indica. The protein is Probable inactive receptor kinase At5g16590 of Arabidopsis thaliana (Mouse-ear cress).